We begin with the raw amino-acid sequence, 216 residues long: Somatotropin (216 aa).

Positions 1–26 (MATDSRTSWLLTVSLLCLLWPQEASA) are cleaved as a signal peptide. A Zn(2+)-binding site is contributed by H45. A disulfide bridge connects residues C78 and C189. A Phosphoserine modification is found at S131. E198 contacts Zn(2+). C206 and C214 are oxidised to a cystine.

It belongs to the somatotropin/prolactin family.

The protein resides in the secreted. Its function is as follows. Plays an important role in growth control. Its major role in stimulating body growth is to stimulate the liver and other tissues to secrete IGF1. It stimulates both the differentiation and proliferation of myoblasts. It also stimulates amino acid uptake and protein synthesis in muscle and other tissues. The polypeptide is Somatotropin (Gh1) (Mus musculus (Mouse)).